Consider the following 501-residue polypeptide: Endoglucanase 1 (501 aa).

A signal peptide spans 1-29 (MALYLSSSRLITFLSFILLLSNGFSSSSS). Residue D96 is the Nucleophile of the active site. Active-site residues include H422, D473, and E482.

This sequence belongs to the glycosyl hydrolase 9 (cellulase E) family.

It is found in the secreted. The enzyme catalyses Endohydrolysis of (1-&gt;4)-beta-D-glucosidic linkages in cellulose, lichenin and cereal beta-D-glucans.. This is Endoglucanase 1 (CEL2) from Arabidopsis thaliana (Mouse-ear cress).